A 637-amino-acid polypeptide reads, in one-letter code: Threonine--tRNA ligase (637 aa).

Residues 1 to 61 form the TGS domain; that stretch reads MLNITLPDGS…VEDSAVQIIT (61 aa). Positions 242–533 are catalytic; that stretch reads DHRKLGKQLD…LIENHAGSFP (292 aa). Residues C333, H384, and H510 each coordinate Zn(2+).

It belongs to the class-II aminoacyl-tRNA synthetase family. In terms of assembly, homodimer. It depends on Zn(2+) as a cofactor.

It localises to the cytoplasm. The enzyme catalyses tRNA(Thr) + L-threonine + ATP = L-threonyl-tRNA(Thr) + AMP + diphosphate + H(+). Catalyzes the attachment of threonine to tRNA(Thr) in a two-step reaction: L-threonine is first activated by ATP to form Thr-AMP and then transferred to the acceptor end of tRNA(Thr). Also edits incorrectly charged L-seryl-tRNA(Thr). The sequence is that of Threonine--tRNA ligase from Neisseria meningitidis serogroup B (strain ATCC BAA-335 / MC58).